The sequence spans 372 residues: Homoserine O-acetyltransferase (372 aa).

The 311-residue stretch at 43–353 folds into the AB hydrolase-1 domain; that stretch reads NAILIFHALT…DKGHDSFLLK (311 aa). The active-site Nucleophile is the S148. R218 contacts substrate. Catalysis depends on residues D314 and H347. Residue D348 coordinates substrate.

This sequence belongs to the AB hydrolase superfamily. MetX family. As to quaternary structure, homodimer.

Its subcellular location is the cytoplasm. The enzyme catalyses L-homoserine + acetyl-CoA = O-acetyl-L-homoserine + CoA. The protein operates within amino-acid biosynthesis; L-methionine biosynthesis via de novo pathway; O-acetyl-L-homoserine from L-homoserine: step 1/1. Transfers an acetyl group from acetyl-CoA to L-homoserine, forming acetyl-L-homoserine. In Pelagibacter ubique (strain HTCC1062), this protein is Homoserine O-acetyltransferase.